Reading from the N-terminus, the 176-residue chain is KxDL motif-containing protein 1 (176 aa).

The residue at position 1 (methionine 1) is an N-acetylmethionine. The tract at residues 95–176 is disordered; that stretch reads HPEAFSHIPE…HTDDEEMPGE (82 aa). Over residues 119–131 the composition is skewed to low complexity; the sequence is STTTTIATSEQST. The segment covering 132-145 has biased composition (polar residues); that stretch reads GSCDTSPDTVSPSL.

The protein belongs to the KXD1 family. As to quaternary structure, component of the BLOC-one-related complex (BORC) which is composed of BLOC1S1, BLOC1S2, BORCS5, BORCS6, BORCS7, BORCS8, KXD1 and SNAPIN. Associates with the BLOC-1 complex. Interacts with BLOC1S1. Interacts with DTNBP1/BLOC1S7 (via coiled-coil domain).

The protein resides in the lysosome membrane. Its function is as follows. As part of the BORC complex may play a role in lysosomes movement and localization at the cell periphery. Associated with the cytosolic face of lysosomes, the BORC complex may recruit ARL8B and couple lysosomes to microtubule plus-end-directed kinesin motor. May also be involved in the biogenesis of lysosome-related organelles such as melanosomes. This is KxDL motif-containing protein 1 (KXD1) from Bos taurus (Bovine).